The following is a 436-amino-acid chain: Probable sodium/metabolite cotransporter BASS4, chloroplastic (436 aa).

The transit peptide at methionine 1–arginine 47 directs the protein to the chloroplast. Transmembrane regions (helical) follow at residues phenylalanine 109–cysteine 129, alanine 131–threonine 151, isoleucine 157–leucine 177, leucine 195–leucine 215, leucine 225–valine 245, phenylalanine 257–glycine 277, leucine 297–valine 314, valine 328–alanine 348, and proline 403–leucine 423.

This sequence belongs to the bile acid:sodium symporter (BASS) (TC 2.A.28) family.

The protein localises to the membrane. Its subcellular location is the plastid. It is found in the chloroplast envelope. Functionally, may function as sodium-coupled metabolite transporter across the chloroplast envelope. The polypeptide is Probable sodium/metabolite cotransporter BASS4, chloroplastic (BASS4) (Arabidopsis thaliana (Mouse-ear cress)).